A 504-amino-acid chain; its full sequence is D-alanine--D-alanyl carrier protein ligase (504 aa).

152 to 153 (TS) contacts ATP. Residue aspartate 197 participates in D-alanine binding. 292–297 (NTYGPT) provides a ligand contact to ATP. Valine 301 serves as a coordination point for D-alanine. ATP is bound by residues aspartate 383, 394–397 (YNGR), and lysine 492. Lysine 492 provides a ligand contact to D-alanine.

The protein belongs to the ATP-dependent AMP-binding enzyme family. DltA subfamily.

The protein localises to the cytoplasm. It carries out the reaction holo-[D-alanyl-carrier protein] + D-alanine + ATP = D-alanyl-[D-alanyl-carrier protein] + AMP + diphosphate. The protein operates within cell wall biogenesis; lipoteichoic acid biosynthesis. Functionally, catalyzes the first step in the D-alanylation of lipoteichoic acid (LTA), the activation of D-alanine and its transfer onto the D-alanyl carrier protein (Dcp) DltC. In an ATP-dependent two-step reaction, forms a high energy D-alanyl-AMP intermediate, followed by transfer of the D-alanyl residue as a thiol ester to the phosphopantheinyl prosthetic group of the Dcp. D-alanylation of LTA plays an important role in modulating the properties of the cell wall in Gram-positive bacteria, influencing the net charge of the cell wall. The sequence is that of D-alanine--D-alanyl carrier protein ligase from Bacillus cereus (strain ATCC 10987 / NRS 248).